We begin with the raw amino-acid sequence, 745 residues long: MHWVKILGVALGAAALLGLGIILGHFAIPKATSPLTSSTSDSQDLDLAILDSVMGQLDASRIRENLRELSKEPHVATSPRDEALVQLLLGRWKDTATGLDSAKTYEYRVLLSFPNAEQPNSVEVVGPNGTTFHSFQPFEKNLTGEQAGPNVLQPYAAYAPPGTPKGLLVYANQGSEEDFKELETQGINLEGTIALTRYGGVGRGAKAINAAKHGVVGVLVYTDPGDINDGKSLPNETFPNSWRLPPSGVERGSYYEYFGDPLTPYLPAHPSSFRLDPHNTSGFPPIPTQPIGFEDARDLLCNLTGTSAPAFWQGALGCEYKLGPGFEPNGSFPAGSEVKVSVHNRLELRTSSNVLGIIQGAVEPDRYVIYGNHRDSWVHGAVDPSSGTAVLLEISRVLGTLLKKGTWRPRRSIIFASWGAEEFGLIGSTEFTEEFLSKLQERTVAYINVDISVFSNATLRAQGTPPVQSVIFSATKEISAPGSSGLSIYDNWIRYTNRTSPVYGLVPSLGTLGAGSDYAAFVHFLGITSMDLAYTYDRSKTSARIYPTYHTAFDTFDYVEKFLDPGFSSHQAVARTAGSVLLRLSDSLFLPLNVSDYSETLQSFLQAAQEALGTQLEKQNISLGPLVTAVANFKAAAASLGEHILTLQKSSPDPLQVRMVNDQLMLLERAFLNPRAFPEERHYSHVLWAPNTASVDTFPGLANAYAKAQEINSGSEAWAEVQRQLSIVVTALEGAAATLVPVADL.

Over 1 to 6 (MHWVKI) the chain is Cytoplasmic. The helical; Signal-anchor for type II membrane protein transmembrane segment at 7–28 (LGVALGAAALLGLGIILGHFAI) threads the bilayer. At 29–745 (PKATSPLTSS…AATLVPVADL (717 aa)) the chain is on the extracellular side. N-linked (GlcNAc...) asparagine glycosylation is found at Asn128, Asn141, and Asn235. Positions 263 and 266 each coordinate Ca(2+). 3 N-linked (GlcNAc...) asparagine glycosylation sites follow: Asn279, Asn302, and Asn329. Cys301 and Cys318 are oxidised to a cystine. Zn(2+) contacts are provided by His373 and Asp383. Catalysis depends on Glu421, which acts as the Proton donor/acceptor. Residue Glu422 participates in Zn(2+) binding. The Ca(2+) site is built by Glu430 and Glu433. Asp450 lines the Zn(2+) pocket. N-linked (GlcNAc...) asparagine glycosylation is found at Asn456 and Asn497. Residue His550 participates in Zn(2+) binding. 2 N-linked (GlcNAc...) asparagine glycosylation sites follow: Asn593 and Asn620.

The protein belongs to the peptidase M28 family. M28B subfamily. Homodimer. Zn(2+) serves as cofactor. Post-translationally, N-glycosylated.

It is found in the apical cell membrane. In terms of biological role, aminopeptidase with broad substrate specificity. Has lower activity with substrates that have Asp or Glu in the P2' position, or Pro in the P3' position. Lacks activity with substrates that have both Pro in the P3' position and Asp or Glu in the P2' position. Lacks carboxypeptidase activity. Lacks dipeptidyl-peptidase IV type activity. The chain is Aminopeptidase NAALADL1 (Naaladl1) from Mus musculus (Mouse).